The chain runs to 1044 residues: Disease resistance protein PIK6-NP (1044 aa).

The structured coiled coil (CC) domain stretch occupies residues 3 to 184 (LAVGASEATM…PQIVSIKEPV (182 aa)). The NB-ARC domain maps to 187 to 543 (KTVMENLEKW…IAEGFATEKQ (357 aa)). Positions 258–302 (QVSKQEEAGGSTESSSRDENTREPQGSSSTSSREENTAESGTKRM) are disordered. 3 LRR repeats span residues 635-657 (LAQV…SFNY), 682-705 (MLVL…IEKL), and 706-728 (EYLE…VGQL). Residues 737–771 (GNKNTRKGLRLPQEKRNKAMKNPSPQGKTKEPAEK) form a disordered region. LRR repeat units follow at residues 808 to 834 (LTGL…LLSS), 840 to 862 (SCGL…LYNM), 866 to 888 (PRYL…ITSI), 889 to 911 (TTLN…ILRN), 935 to 958 (KGIL…EFKS), and 980 to 1004 (MPAL…ILEN).

This sequence belongs to the disease resistance NB-LRR family.

In terms of biological role, probable disease resistance protein. Resistance proteins guard the plant against pathogens that contain an appropriate avirulence protein via an indirect interaction with this avirulence protein. That triggers a defense system including the hypersensitive response, which restricts the pathogen growth. At the opposite of cultivar Kusabue, the cultivar Nipponbare doesn't recognize the effector avirulence protein AVR-Pik from M.oryzae. The protein is Disease resistance protein PIK6-NP of Oryza sativa subsp. japonica (Rice).